A 307-amino-acid chain; its full sequence is 2-dehydropantoate 2-reductase (307 aa).

NADP(+) is bound by residues 7–12, asparagine 102, and alanine 128; that span reads GSGAMG. Asparagine 102 is a binding site for substrate. The Proton donor role is filled by lysine 184. Asparagine 188, asparagine 192, and serine 255 together coordinate substrate. Residue glutamate 268 participates in NADP(+) binding.

This sequence belongs to the ketopantoate reductase family.

It is found in the cytoplasm. The catalysed reaction is (R)-pantoate + NADP(+) = 2-dehydropantoate + NADPH + H(+). It functions in the pathway cofactor biosynthesis; (R)-pantothenate biosynthesis; (R)-pantoate from 3-methyl-2-oxobutanoate: step 2/2. In terms of biological role, catalyzes the NADPH-dependent reduction of ketopantoate into pantoic acid. In Streptococcus pyogenes serotype M1, this protein is 2-dehydropantoate 2-reductase (apbA).